Consider the following 480-residue polypeptide: Glutamate--tRNA ligase (480 aa).

Residues 9 to 19 (PSPTGDPHVGT) carry the 'HIGH' region motif. A 'KMSKS' region motif is present at residues 253-257 (KISKR). Lysine 256 provides a ligand contact to ATP.

The protein belongs to the class-I aminoacyl-tRNA synthetase family. Glutamate--tRNA ligase type 1 subfamily. As to quaternary structure, monomer.

Its subcellular location is the cytoplasm. It catalyses the reaction tRNA(Glu) + L-glutamate + ATP = L-glutamyl-tRNA(Glu) + AMP + diphosphate. In terms of biological role, catalyzes the attachment of glutamate to tRNA(Glu) in a two-step reaction: glutamate is first activated by ATP to form Glu-AMP and then transferred to the acceptor end of tRNA(Glu). The polypeptide is Glutamate--tRNA ligase (Deinococcus geothermalis (strain DSM 11300 / CIP 105573 / AG-3a)).